Reading from the N-terminus, the 252-residue chain is Phosphate import ATP-binding protein PstB (252 aa).

Positions 5 to 247 (MRGQDVKVFY…PKEQRTQDYI (243 aa)) constitute an ABC transporter domain. 37-44 (GPSGCGKS) contributes to the ATP binding site.

This sequence belongs to the ABC transporter superfamily. Phosphate importer (TC 3.A.1.7) family. In terms of assembly, the complex is composed of two ATP-binding proteins (PstB), two transmembrane proteins (PstC and PstA) and a solute-binding protein (PstS).

Its subcellular location is the cell inner membrane. It catalyses the reaction phosphate(out) + ATP + H2O = ADP + 2 phosphate(in) + H(+). Part of the ABC transporter complex PstSACB involved in phosphate import. Responsible for energy coupling to the transport system. The sequence is that of Phosphate import ATP-binding protein PstB from Bartonella quintana (strain Toulouse) (Rochalimaea quintana).